A 551-amino-acid chain; its full sequence is Alkaline nuclease (551 aa).

The protein belongs to the herpesviridae alkaline nuclease family. As to quaternary structure, interacts with major DNA-binding protein; this interaction increases the nuclease processivity of the alkaline exonuclease.

It is found in the host nucleus. The protein localises to the host cytoplasm. Plays a role in processing non linear or branched viral DNA intermediates in order to promote the production of mature packaged unit-length linear progeny viral DNA molecules. Exhibits endonuclease and exonuclease activities and accepts both double-stranded and single-stranded DNA as substrate. Exonuclease digestion of DNA is in the 5'-&gt; 3' direction and the products are 5'-monophosphate nucleosides. Additionally, forms a recombinase with the major DNA-binding protein, which displays strand exchange activity. In Homo sapiens (Human), this protein is Alkaline nuclease.